A 177-amino-acid chain; its full sequence is Large ribosomal subunit protein uL6 (177 aa).

This sequence belongs to the universal ribosomal protein uL6 family. In terms of assembly, part of the 50S ribosomal subunit.

Its function is as follows. This protein binds to the 23S rRNA, and is important in its secondary structure. It is located near the subunit interface in the base of the L7/L12 stalk, and near the tRNA binding site of the peptidyltransferase center. The chain is Large ribosomal subunit protein uL6 from Methanosarcina barkeri (strain Fusaro / DSM 804).